Reading from the N-terminus, the 106-residue chain is Small ribosomal subunit protein mS33 (106 aa).

Ser2 is modified (N-acetylserine). Residues 85–94 (LKKLRGKVKP) are compositionally biased toward basic residues. The segment at 85–106 (LKKLRGKVKPRKGEGKRAAKKK) is disordered. Residues 95-106 (RKGEGKRAAKKK) are compositionally biased toward basic and acidic residues.

This sequence belongs to the mitochondrion-specific ribosomal protein mS33 family. Component of the mitochondrial ribosome small subunit (28S) which comprises a 12S rRNA and about 30 distinct proteins.

It localises to the mitochondrion. This is Small ribosomal subunit protein mS33 from Bos taurus (Bovine).